A 351-amino-acid chain; its full sequence is Synaptonemal complex central element protein 1 (351 aa).

Over residues 1–10 (MAGRSLTSKA) the composition is skewed to polar residues. Disordered stretches follow at residues 1-31 (MAGRSLTSKAEPTAGAVDRAEKAGGQDTSSQ) and 267-351 (KCQQ…KELF). Residues 52 to 290 (RVEVLINRIN…ELEKHGMQVP (239 aa)) adopt a coiled-coil conformation.

This sequence belongs to the SYCE family. Homodimer. Found in a complex with SYCP1 and SYCE2. Interacts with SYCP1, SYCE2 and SYCE3. Interacts with SIX6OS1.

Its subcellular location is the nucleus. The protein resides in the chromosome. Its function is as follows. Major component of the transverse central element of synaptonemal complexes (SCS), formed between homologous chromosomes during meiotic prophase. Requires SYCP1 in order to be incorporated into the central element. May have a role in the synaptonemal complex assembly, stabilization and recombination. This Homo sapiens (Human) protein is Synaptonemal complex central element protein 1 (SYCE1).